Here is a 306-residue protein sequence, read N- to C-terminus: uncharacterized protein (306 aa).

Positions H40–E156 are disordered. A compositionally biased stretch (low complexity) spans E64–L73. The span at K129–S139 shows a compositional bias: basic residues.

This is an uncharacterized protein from Rattus norvegicus (Rat).